The primary structure comprises 165 residues: Small ribosomal subunit protein eS10 (165 aa).

A disordered region spans residues 92–165 (ATLRRSRPET…FGRGRGQAPQ (74 aa)). Over residues 97-128 (SRPETGRPRPKGLEGERPPRLPRGETDRDTYR) the composition is skewed to basic and acidic residues. Residues 142-153 (AGAGAATEFQFR) are compositionally biased toward low complexity. Residues 154 to 165 (GGFGRGRGQAPQ) are compositionally biased toward gly residues.

It belongs to the eukaryotic ribosomal protein eS10 family. Component of the small ribosomal subunit.

Its subcellular location is the cytoplasm. The protein resides in the nucleus. It localises to the nucleolus. Its function is as follows. Component of the 40S ribosomal subunit. The ribosome is a large ribonucleoprotein complex responsible for the synthesis of proteins in the cell. The polypeptide is Small ribosomal subunit protein eS10 (rps10) (Xenopus laevis (African clawed frog)).